A 188-amino-acid chain; its full sequence is CXXC-type zinc finger protein 4 (188 aa).

Residues 1 to 20 (MHRNDSQRLGKPGGAPESLQ) form a disordered region. The segment at 122–163 (AKKKRKRCGVCVPCKRLINCGVCSSCRNRKTGHQICKFRKCE) adopts a CXXC-type zinc-finger fold. Cys-129, Cys-132, Cys-135, Cys-141, Cys-144, Cys-147, Cys-157, and Cys-162 together coordinate Zn(2+).

It localises to the cytoplasm. Functionally, acts as a negative regulator of the Wnt signaling pathway required for anterior neural structure formation. Binds preferentially to DNA containing cytidine-phosphate-guanosine (CpG) dinucleotides over CpH (H=A, T, and C), hemimethylated-CpG and hemimethylated-hydroxymethyl-CpG. This chain is CXXC-type zinc finger protein 4 (cxxc4), found in Xenopus tropicalis (Western clawed frog).